We begin with the raw amino-acid sequence, 168 residues long: Transcription elongation factor GreB (168 aa).

The protein belongs to the GreA/GreB family. GreB subfamily.

Functionally, necessary for efficient RNA polymerase transcription elongation past template-encoded arresting sites. The arresting sites in DNA have the property of trapping a certain fraction of elongating RNA polymerases that pass through, resulting in locked ternary complexes. Cleavage of the nascent transcript by cleavage factors such as GreA or GreB allows the resumption of elongation from the new 3'terminus. GreB releases sequences of up to 9 nucleotides in length. This chain is Transcription elongation factor GreB, found in Xanthomonas axonopodis pv. citri (strain 306).